The sequence spans 218 residues: Ras-related protein RABE1e (218 aa).

22 to 29 (GDSGVGKS) is a binding site for GTP. Positions 44-52 (FITTIGIDF) match the Effector region motif. GTP contacts are provided by residues 70 to 74 (DTAGQ), 128 to 131 (NKAD), and 159 to 160 (SA). The segment at 182–218 (TESDTKAEPQGIKITKQDANKASSSSTNEKSACCSYV) is disordered. Residues 201-211 (NKASSSSTNEK) show a composition bias toward polar residues. S-geranylgeranyl cysteine attachment occurs at residues cysteine 214 and cysteine 215.

This sequence belongs to the small GTPase superfamily. Rab family. As to quaternary structure, interacts with PI5K2.

It localises to the golgi apparatus membrane. It is found in the cell membrane. Functionally, involved in membrane trafficking from the Golgi to the plasma membrane. The polypeptide is Ras-related protein RABE1e (RABE1E) (Arabidopsis thaliana (Mouse-ear cress)).